Here is a 179-residue protein sequence, read N- to C-terminus: Shikimate kinase (179 aa).

Position 12–17 (12–17) interacts with ATP; that stretch reads GVGKSK. Mg(2+) is bound at residue Ser-16. The substrate site is built by Asp-34, Arg-61, and Gly-83. Residue Arg-131 coordinates ATP. Arg-147 lines the substrate pocket.

Belongs to the shikimate kinase family. Monomer. Mg(2+) is required as a cofactor.

The protein resides in the cytoplasm. It carries out the reaction shikimate + ATP = 3-phosphoshikimate + ADP + H(+). It functions in the pathway metabolic intermediate biosynthesis; chorismate biosynthesis; chorismate from D-erythrose 4-phosphate and phosphoenolpyruvate: step 5/7. Functionally, catalyzes the specific phosphorylation of the 3-hydroxyl group of shikimic acid using ATP as a cosubstrate. The polypeptide is Shikimate kinase (Leptospira borgpetersenii serovar Hardjo-bovis (strain JB197)).